A 231-amino-acid chain; its full sequence is 7-cyano-7-deazaguanine synthase (231 aa).

An ATP-binding site is contributed by 8–18 (FSGGQDSTTCL). Zn(2+) contacts are provided by Cys188, Cys197, Cys200, and Cys203.

The protein belongs to the QueC family. The cofactor is Zn(2+).

The catalysed reaction is 7-carboxy-7-deazaguanine + NH4(+) + ATP = 7-cyano-7-deazaguanine + ADP + phosphate + H2O + H(+). The protein operates within purine metabolism; 7-cyano-7-deazaguanine biosynthesis. Its function is as follows. Catalyzes the ATP-dependent conversion of 7-carboxy-7-deazaguanine (CDG) to 7-cyano-7-deazaguanine (preQ(0)). The protein is 7-cyano-7-deazaguanine synthase of Escherichia coli (strain SE11).